The chain runs to 486 residues: Pentatricopeptide repeat-containing protein At3g06430, chloroplastic (486 aa).

The N-terminal 36 residues, 1–36 (MASMSLSFSSSLCSSRIPEGKRRFRHRDVGIVRCVL), are a transit peptide targeting the chloroplast. PPR repeat units follow at residues 123-157 (KEGTYMKLLVLLGKSGQPNRAQKLFDEMLEEGLEP), 158-188 (TVELYTALLAAYTRSNLIDDAFSILDKMKSF), 194-228 (DVFTYSTLLKACVDASQFDLVDSLYKEMDERLITP), 229-264 (NTVTQNIVLSGYGRVGRFDQMEKVLSDMLVSTACKP), 265-299 (DVWTMNIILSVFGNMGKIDMMESWYEKFRNFGIEP), 300-334 (ETRTFNILIGSYGKKRMYDKMSSVMEYMRKLEFPW), 335-369 (TTSTYNNIIEAFADVGDAKNMELTFDQMRSEGMKA), 370-404 (DTKTFCCLINGYANAGLFHKVISSVQLAAKFEIPE), 405-439 (NTAFYNAVISACAKADDLIEMERVYIRMKERQCVC), and 440-470 (DSRTFEIMVEAYEKEGMNDKIYYLEQERQKL).

Belongs to the PPR family. P subfamily.

It localises to the plastid. It is found in the chloroplast. The protein is Pentatricopeptide repeat-containing protein At3g06430, chloroplastic (EMB2750) of Arabidopsis thaliana (Mouse-ear cress).